We begin with the raw amino-acid sequence, 183 residues long: Large ribosomal subunit protein uL5 (183 aa).

This sequence belongs to the universal ribosomal protein uL5 family. As to quaternary structure, part of the 50S ribosomal subunit; part of the 5S rRNA/L5/L18/L25 subcomplex. Contacts the 5S rRNA and the P site tRNA. Forms a bridge to the 30S subunit in the 70S ribosome.

This is one of the proteins that bind and probably mediate the attachment of the 5S RNA into the large ribosomal subunit, where it forms part of the central protuberance. In the 70S ribosome it contacts protein S13 of the 30S subunit (bridge B1b), connecting the 2 subunits; this bridge is implicated in subunit movement. Contacts the P site tRNA; the 5S rRNA and some of its associated proteins might help stabilize positioning of ribosome-bound tRNAs. The protein is Large ribosomal subunit protein uL5 of Pseudothermotoga lettingae (strain ATCC BAA-301 / DSM 14385 / NBRC 107922 / TMO) (Thermotoga lettingae).